Reading from the N-terminus, the 61-residue chain is U-stichotoxin-Hcr1a (61 aa).

An N-terminal signal peptide occupies residues 1–21 (MKPAIFLMLFVAMFLISEGEG). Positions 22 to 31 (FKPKDAPQER) are excised as a propeptide. Position 36 is a hydroxyproline (Pro36). Disulfide bonds link Cys41–Cys53 and Cys44–Cys59.

It belongs to the Hau1a/HC18/HC19 family.

Its subcellular location is the secreted. The protein resides in the nematocyst. Its function is as follows. Toxin that is lethal to crab. Does not produce the typical symptoms associated with sodium channel toxins in crabs, suggesting that it likely does not act on sodium channels. The polypeptide is U-stichotoxin-Hcr1a (Radianthus crispa (Leathery sea anemone)).